The following is a 162-amino-acid chain: ATP synthase subunit b 1 (162 aa).

The chain crosses the membrane as a helical span at residues 1–21 (MLLTAEFWVAVAFVAFLVIVW).

It belongs to the ATPase B chain family. F-type ATPases have 2 components, F(1) - the catalytic core - and F(0) - the membrane proton channel. F(1) has five subunits: alpha(3), beta(3), gamma(1), delta(1), epsilon(1). F(0) has three main subunits: a(1), b(2) and c(10-14). The alpha and beta chains form an alternating ring which encloses part of the gamma chain. F(1) is attached to F(0) by a central stalk formed by the gamma and epsilon chains, while a peripheral stalk is formed by the delta and b chains.

The protein localises to the cell inner membrane. In terms of biological role, f(1)F(0) ATP synthase produces ATP from ADP in the presence of a proton or sodium gradient. F-type ATPases consist of two structural domains, F(1) containing the extramembraneous catalytic core and F(0) containing the membrane proton channel, linked together by a central stalk and a peripheral stalk. During catalysis, ATP synthesis in the catalytic domain of F(1) is coupled via a rotary mechanism of the central stalk subunits to proton translocation. Its function is as follows. Component of the F(0) channel, it forms part of the peripheral stalk, linking F(1) to F(0). This is ATP synthase subunit b 1 from Methylorubrum extorquens (strain PA1) (Methylobacterium extorquens).